Consider the following 175-residue polypeptide: RNA pyrophosphohydrolase (175 aa).

Positions 6 to 149 (GYRPNVGIVI…KRDVYRRVMK (144 aa)) constitute a Nudix hydrolase domain. Positions 38-59 (GGINPGETAEQAMYRELFEEVG) match the Nudix box motif.

The protein belongs to the Nudix hydrolase family. RppH subfamily. A divalent metal cation serves as cofactor.

In terms of biological role, accelerates the degradation of transcripts by removing pyrophosphate from the 5'-end of triphosphorylated RNA, leading to a more labile monophosphorylated state that can stimulate subsequent ribonuclease cleavage. This Serratia proteamaculans (strain 568) protein is RNA pyrophosphohydrolase.